Here is a 563-residue protein sequence, read N- to C-terminus: Light-independent protochlorophyllide reductase subunit B (563 aa).

A [4Fe-4S] cluster-binding site is contributed by aspartate 36. Aspartate 349 serves as the catalytic Proton donor. A substrate-binding site is contributed by 484 to 485; that stretch reads GM.

It belongs to the ChlB/BchB/BchZ family. In terms of assembly, protochlorophyllide reductase is composed of three subunits; ChlL, ChlN and ChlB. Forms a heterotetramer of two ChlB and two ChlN subunits. The cofactor is [4Fe-4S] cluster.

It localises to the plastid. It is found in the chloroplast. It carries out the reaction chlorophyllide a + oxidized 2[4Fe-4S]-[ferredoxin] + 2 ADP + 2 phosphate = protochlorophyllide a + reduced 2[4Fe-4S]-[ferredoxin] + 2 ATP + 2 H2O. It functions in the pathway porphyrin-containing compound metabolism; chlorophyll biosynthesis (light-independent). Its function is as follows. Component of the dark-operative protochlorophyllide reductase (DPOR) that uses Mg-ATP and reduced ferredoxin to reduce ring D of protochlorophyllide (Pchlide) to form chlorophyllide a (Chlide). This reaction is light-independent. The NB-protein (ChlN-ChlB) is the catalytic component of the complex. The chain is Light-independent protochlorophyllide reductase subunit B from Chlamydomonas moewusii (Chlamydomonas eugametos).